Reading from the N-terminus, the 241-residue chain is Pyridoxine 5'-phosphate synthase (241 aa).

Asparagine 7 lines the 3-amino-2-oxopropyl phosphate pocket. 9–10 (DH) lines the 1-deoxy-D-xylulose 5-phosphate pocket. A 3-amino-2-oxopropyl phosphate-binding site is contributed by arginine 18. The Proton acceptor role is filled by histidine 43. 1-deoxy-D-xylulose 5-phosphate contacts are provided by arginine 45 and histidine 50. Catalysis depends on glutamate 70, which acts as the Proton acceptor. Threonine 100 provides a ligand contact to 1-deoxy-D-xylulose 5-phosphate. The active-site Proton donor is histidine 190. Residues glycine 191 and 212–213 (GH) contribute to the 3-amino-2-oxopropyl phosphate site.

Belongs to the PNP synthase family. Homooctamer; tetramer of dimers.

Its subcellular location is the cytoplasm. The catalysed reaction is 3-amino-2-oxopropyl phosphate + 1-deoxy-D-xylulose 5-phosphate = pyridoxine 5'-phosphate + phosphate + 2 H2O + H(+). It participates in cofactor biosynthesis; pyridoxine 5'-phosphate biosynthesis; pyridoxine 5'-phosphate from D-erythrose 4-phosphate: step 5/5. Functionally, catalyzes the complicated ring closure reaction between the two acyclic compounds 1-deoxy-D-xylulose-5-phosphate (DXP) and 3-amino-2-oxopropyl phosphate (1-amino-acetone-3-phosphate or AAP) to form pyridoxine 5'-phosphate (PNP) and inorganic phosphate. The sequence is that of Pyridoxine 5'-phosphate synthase from Bordetella avium (strain 197N).